The chain runs to 465 residues: Cysteine--tRNA ligase (465 aa).

Cys28 serves as a coordination point for Zn(2+). The short motif at Met30 to His40 is the 'HIGH' region element. Positions 209, 234, and 238 each coordinate Zn(2+). Positions Lys266 to Ser270 match the 'KMSKS' region motif. Lys269 provides a ligand contact to ATP.

Belongs to the class-I aminoacyl-tRNA synthetase family. In terms of assembly, monomer. Zn(2+) is required as a cofactor.

The protein localises to the cytoplasm. The enzyme catalyses tRNA(Cys) + L-cysteine + ATP = L-cysteinyl-tRNA(Cys) + AMP + diphosphate. The polypeptide is Cysteine--tRNA ligase (Nitrosomonas europaea (strain ATCC 19718 / CIP 103999 / KCTC 2705 / NBRC 14298)).